The chain runs to 426 residues: MTVTEVAPQALPFQELQEKILPELHLLAAGLGIENYRKLKKDALALAIMEKQADAEGQSLARGYLDITSDGYGFLQADLLDPASRSVLVTAGVIKQYHLRTGDEVIGRARKPRENERYGSLVRVEAVNGLDPEAARQRPRFDDLTPTFPDQQLVLEDPSTDDGLSLRVVDLLVPIGRGQRALIVAPPKAGKTTLLKKIANSITKNYPDVTVMVLLVDERPEEVTDFRESVQGAQVIASTFDEPPQHHVRVAEFVHERARRIVEEGGHVVILLDSITRLARANNLVTPPTGRTLSGGLDSNALHWPKRFLGAARNIREGGSLTILATALVETGSRMDDVIFEEFKGTGNAELVLSRRLEERRIFPALDILKSGTRREELLLQPEVLKKMWLLRKVISDMDPADAMEMLLGRMGKTRNNVEFLAALAG.

Positions 58-131 (QSLARGYLDI…VRVEAVNGLD (74 aa)) constitute a Rho RNA-BD domain. Residues 176–181 (GRGQRA), 188–193 (KAGKTT), and Arg219 each bind ATP.

It belongs to the Rho family. Homohexamer. The homohexamer assembles into an open ring structure.

Its function is as follows. Facilitates transcription termination by a mechanism that involves Rho binding to the nascent RNA, activation of Rho's RNA-dependent ATPase activity, and release of the mRNA from the DNA template. This is Transcription termination factor Rho from Deinococcus radiodurans (strain ATCC 13939 / DSM 20539 / JCM 16871 / CCUG 27074 / LMG 4051 / NBRC 15346 / NCIMB 9279 / VKM B-1422 / R1).